A 362-amino-acid polypeptide reads, in one-letter code: GDSL esterase/lipase At5g18430 (362 aa).

The N-terminal stretch at 1 to 19 (MTISTVIAFMSMFLVFVMS) is a signal peptide. Serine 35 functions as the Nucleophile in the catalytic mechanism. Asparagine 117 carries N-linked (GlcNAc...) asparagine glycosylation. Catalysis depends on residues aspartate 327 and histidine 330. Asparagine 355 carries an N-linked (GlcNAc...) asparagine glycan.

Belongs to the 'GDSL' lipolytic enzyme family.

Its subcellular location is the secreted. The chain is GDSL esterase/lipase At5g18430 from Arabidopsis thaliana (Mouse-ear cress).